We begin with the raw amino-acid sequence, 159 residues long: Endoribonuclease YbeY (159 aa).

Zn(2+)-binding residues include His-125, His-129, and His-135.

The protein belongs to the endoribonuclease YbeY family. Zn(2+) is required as a cofactor.

It localises to the cytoplasm. Single strand-specific metallo-endoribonuclease involved in late-stage 70S ribosome quality control and in maturation of the 3' terminus of the 16S rRNA. This is Endoribonuclease YbeY from Brevibacillus brevis (strain 47 / JCM 6285 / NBRC 100599).